Reading from the N-terminus, the 281-residue chain is Fibrinogen-like protein 1-like protein (281 aa).

A signal peptide spans 1-33; that stretch reads MGLQAGTRQLHGNLILLPVAVVMLLLCTSPVCA. A Fibrinogen C-terminal domain is found at 34–246; sequence TASVGLPADC…RPSSWSNPPM (213 aa). Cystine bridges form between Cys43–Cys69 and Cys201–Cys213. A compositionally biased stretch (low complexity) spans 260–269; that stretch reads PSRSPSLPSP. The segment at 260–281 is disordered; that stretch reads PSRSPSLPSPITATHTVRNQLQ. Polar residues predominate over residues 270–281; the sequence is ITATHTVRNQLQ.

In terms of tissue distribution, expressed in smal intestine, colon and lung.

Shows a cytidine deaminase activity on 2'-deoxycytidine (in vitro), however shows no RNA editing activity (in vitro). The chain is Fibrinogen-like protein 1-like protein from Gallus gallus (Chicken).